The chain runs to 294 residues: Cuticle collagen 144 (294 aa).

An N-terminal signal peptide occupies residues 1 to 30 (MEKILVTISTGAASFAVLAVLFTIPSLYNT). Pro residues predominate over residues 100-112 (TCPPGPPGPPGQP). 2 disordered regions span residues 100–134 (TCPPGPPGPPGQPGQPGTPGAPGPKGEDNTSTYAP) and 148–278 (PQGP…GNDA). Triple-helical region regions lie at residues 102-127 (PPGPPGPPGQPGQPGTPGAPGPKGED) and 153-274 (GPEG…PGLP). Low complexity-rich tracts occupy residues 164–209 (AGPD…PGQD) and 219–265 (APGA…DGQP).

In terms of assembly, collagen polypeptide chains are complexed within the cuticle by disulfide bonds and other types of covalent cross-links.

Nematode cuticles are composed largely of collagen-like proteins. The cuticle functions both as an exoskeleton and as a barrier to protect the worm from its environment. The polypeptide is Cuticle collagen 144 (Caenorhabditis briggsae).